We begin with the raw amino-acid sequence, 528 residues long: Phosphoenolpyruvate carboxykinase (ATP) (528 aa).

Substrate-binding residues include R56, Y192, and K198. ATP-binding positions include K198, H217, and 233–241 (GLSGTGKTT). Mn(2+) contacts are provided by K198 and H217. D254 contacts Mn(2+). ATP-binding residues include E282, R319, and T444. Residue R319 coordinates substrate.

Belongs to the phosphoenolpyruvate carboxykinase (ATP) family. Mn(2+) serves as cofactor.

The protein localises to the cytoplasm. It catalyses the reaction oxaloacetate + ATP = phosphoenolpyruvate + ADP + CO2. Its pathway is carbohydrate biosynthesis; gluconeogenesis. Functionally, involved in the gluconeogenesis. Catalyzes the conversion of oxaloacetate (OAA) to phosphoenolpyruvate (PEP) through direct phosphoryl transfer between the nucleoside triphosphate and OAA. This is Phosphoenolpyruvate carboxykinase (ATP) from Lysinibacillus sphaericus (strain C3-41).